The sequence spans 437 residues: D-aminoacyl-tRNA deacylase (437 aa).

It belongs to the DtdA deacylase family. In terms of assembly, monomer. Zn(2+) is required as a cofactor.

It catalyses the reaction a D-aminoacyl-tRNA + H2O = a tRNA + a D-alpha-amino acid + H(+). It carries out the reaction glycyl-tRNA(Ala) + H2O = tRNA(Ala) + glycine + H(+). D-aminoacyl-tRNA deacylase with broad substrate specificity. By recycling D-aminoacyl-tRNA to D-amino acids and free tRNA molecules, this enzyme counteracts the toxicity associated with the formation of D-aminoacyl-tRNA entities in vivo. The chain is D-aminoacyl-tRNA deacylase from Methanoculleus marisnigri (strain ATCC 35101 / DSM 1498 / JR1).